Here is a 161-residue protein sequence, read N- to C-terminus: Vitamin K-dependent protein C (161 aa).

The Peptidase S1 domain maps to 1–161 (EKWELDLDIE…GCGLLHNYGV (161 aa)). N17 carries N-linked (GlcNAc...) asparagine glycosylation. The active-site Charge relay system is D26. N-linked (GlcNAc...) asparagine glycosylation occurs at N82. Cystine bridges form between C100–C114 and C125–C153. The active-site Charge relay system is the S129.

Belongs to the peptidase S1 family. In terms of tissue distribution, plasma; synthesized in the liver.

It localises to the secreted. The protein localises to the golgi apparatus. The protein resides in the endoplasmic reticulum. It catalyses the reaction Degradation of blood coagulation factors Va and VIIIa.. Functionally, protein C is a vitamin K-dependent serine protease that regulates blood coagulation by inactivating factors Va and VIIIa in the presence of calcium ions and phospholipids. Exerts a protective effect on the endothelial cell barrier function. This chain is Vitamin K-dependent protein C (PROC), found in Macaca mulatta (Rhesus macaque).